Here is a 156-residue protein sequence, read N- to C-terminus: Snaclec 2 (156 aa).

The first 21 residues, 1 to 21 (MGRFIFLSSGLLVVFLSLSGA), serve as a signal peptide directing secretion. Cystine bridges form between Cys-25/Cys-36, Cys-53/Cys-150, and Cys-125/Cys-142. A C-type lectin domain is found at 32 to 151 (FDQHCYRAFD…CGDDYPFVCK (120 aa)).

The protein belongs to the snaclec family. As to quaternary structure, heterodimer; disulfide-linked. Expressed by the venom gland.

It localises to the secreted. Interferes with one step of hemostasis (modulation of platelet aggregation, or coagulation cascade, for example). The chain is Snaclec 2 from Bitis gabonica (Gaboon adder).